A 193-amino-acid chain; its full sequence is Ribonuclease HII (193 aa).

One can recognise an RNase H type-2 domain in the interval 15-193 (YIVAGVDEAG…SYHRKSFKFC (179 aa)). A divalent metal cation is bound by residues aspartate 21, glutamate 22, and aspartate 112.

This sequence belongs to the RNase HII family. Mn(2+) is required as a cofactor. Requires Mg(2+) as cofactor.

It localises to the cytoplasm. It catalyses the reaction Endonucleolytic cleavage to 5'-phosphomonoester.. Its function is as follows. Endonuclease that specifically degrades the RNA of RNA-DNA hybrids. This is Ribonuclease HII from Rickettsia typhi (strain ATCC VR-144 / Wilmington).